The sequence spans 101 residues: UPF0235 protein CJA_0091 (101 aa).

Belongs to the UPF0235 family.

The sequence is that of UPF0235 protein CJA_0091 from Cellvibrio japonicus (strain Ueda107) (Pseudomonas fluorescens subsp. cellulosa).